Reading from the N-terminus, the 408-residue chain is MLIEHLNRQLREREAQSLRRRRRIAETPCAPHQRVSLDGQTASEARELLAFCSNDYLGLANHPALIGALAEGARLWGAGAGASHLISGHTRAHAALEDTLAEWAAPNIPGAKALSFCTGYMANLALLTALGDAEATLFADKLNHASLVDGALLAKAKLQRYAHRQFDVLERQLAACTTPIKLIVTDAVFSMDGDLAELDQLLSLAERFDAWLVIDDAHGFGVLGPKGRGSLAHFGLRSERLILMGTLGKAAGLGGAFVAAHPSVIDWLVQSARAYIYTTAAPPAIAHALSASLALIAGDEGEARRQHLRELIAALRCQLAALIAAQPQLGWRLAESDTAIQPLIVGSNDSALALAAALDAQGLWVPAIRPPTVPVGTARLRITLSAAHSQADVTRLVAALATTARELA.

A substrate-binding site is contributed by arginine 20. 119–120 (GY) lines the pyridoxal 5'-phosphate pocket. Substrate is bound at residue histidine 144. Residues serine 190, histidine 218, and threonine 246 each coordinate pyridoxal 5'-phosphate. The residue at position 249 (lysine 249) is an N6-(pyridoxal phosphate)lysine. Residue threonine 372 coordinates substrate.

The protein belongs to the class-II pyridoxal-phosphate-dependent aminotransferase family. BioF subfamily. Homodimer. The cofactor is pyridoxal 5'-phosphate.

The catalysed reaction is 6-carboxyhexanoyl-[ACP] + L-alanine + H(+) = (8S)-8-amino-7-oxononanoate + holo-[ACP] + CO2. The protein operates within cofactor biosynthesis; biotin biosynthesis. In terms of biological role, catalyzes the decarboxylative condensation of pimeloyl-[acyl-carrier protein] and L-alanine to produce 8-amino-7-oxononanoate (AON), [acyl-carrier protein], and carbon dioxide. In Leptothrix cholodnii (strain ATCC 51168 / LMG 8142 / SP-6) (Leptothrix discophora (strain SP-6)), this protein is 8-amino-7-oxononanoate synthase.